Reading from the N-terminus, the 395-residue chain is Vomeronasal type-1 receptor 2 (395 aa).

Residues 12 to 32 (LYPINISAAWHLGPLPVSCFV) traverse the membrane as a helical segment. Residues 33 to 51 (SNKYQCSLAFGATTGLRVL) are Extracellular-facing. A helical membrane pass occupies residues 52–72 (VVVVPQTQLSFLSSLCLVSLF). Residues 73-93 (LHSLVSAHGEKPTKPVGLDPT) lie on the Cytoplasmic side of the membrane. A helical transmembrane segment spans residues 94 to 114 (LFQVVVGILGNFSLLYYYMFL). Residues 115 to 170 (YFRGYKPRSTDLILRHLTVADSLVILSKRIPETMATFGLKHFDNYFGCKFLLYAHR) lie on the Extracellular side of the membrane. Residues 171-191 (VGRGVSIGSTCLLSVFQVITI) form a helical membrane-spanning segment. At 192–208 (NPRNSRWAEMKVKAPTY) the chain is on the cytoplasmic side. The chain crosses the membrane as a helical span at residues 209-229 (IGLSNILCWAFHMLVNAIFPI). The Extracellular segment spans residues 230-267 (YTTGKWSNNNITKKGDLGYCSAPLSDEVTKSVYAALTS). An N-linked (GlcNAc...) asparagine glycan is attached at N239. The helical transmembrane segment at 268 to 288 (FHDVLCLGLMLWASSSIVLVL) threads the bilayer. The Cytoplasmic portion of the chain corresponds to 289–316 (YRHKQQVQHICRNNLYPNSSPGNRAIQS). A helical membrane pass occupies residues 317–337 (ILALVSTFALCYALSFITYVY). Over 338–346 (LALFDNSSW) the chain is Extracellular. Residue N343 is glycosylated (N-linked (GlcNAc...) asparagine). The helical transmembrane segment at 347 to 367 (WLVNTAALIIACFPTISPFVL) threads the bilayer. Topologically, residues 368-395 (MCRDPSRSRLCSICCRRNRRFFHDFRKM) are cytoplasmic.

This sequence belongs to the G-protein coupled receptor 1 family.

The protein resides in the cell membrane. In terms of biological role, putative pheromone receptor. This Homo sapiens (Human) protein is Vomeronasal type-1 receptor 2 (VN1R2).